Consider the following 546-residue polypeptide: FAD-dependent monooxygenase (546 aa).

The N-terminal stretch at 1-17 is a signal peptide; that stretch reads MYDVIVVGAGWCGLAAA. An FAD-binding site is contributed by I106. N-linked (GlcNAc...) asparagine glycosylation is found at N239 and N343.

The protein belongs to the FAD-binding monooxygenase family. FAD is required as a cofactor.

It participates in antifungal biosynthesis. Its function is as follows. FAD-dependent monooxygenase; part of the gene cluster that mediates the biosynthesis of the tetrahydropyranyl antifungal agent lanomycin that acts as an inhibitor of CYP51 and blocks the ergosterol biosynthesis. The biosynthesis probably begins with the formation of an hexaketide, followed by methionine mediated alkylation of C-2 and C-6, and methylation of the reduced C-3 oxygen, pyran forming reductive ring closure, oxygenation of C-4, beta-keto reduction, enoyl reduction and dehydration of the remaining oxygens, and finally, acylation with glycine to complete the biosynthesis. The sequence is that of FAD-dependent monooxygenase from Pyrenophora dematioidea (Helminthosporium dematioideum).